The primary structure comprises 125 residues: Glycine cleavage system H protein (125 aa).

Positions 22–104 (SYIIGITDFA…YDTGWILKLT (83 aa)) constitute a Lipoyl-binding domain. Lys63 is subject to N6-lipoyllysine.

Belongs to the GcvH family. The glycine cleavage system is composed of four proteins: P, T, L and H. It depends on (R)-lipoate as a cofactor.

Functionally, the glycine cleavage system catalyzes the degradation of glycine. The H protein shuttles the methylamine group of glycine from the P protein to the T protein. Is also involved in protein lipoylation via its role as an octanoyl/lipoyl carrier protein intermediate. In Listeria innocua serovar 6a (strain ATCC BAA-680 / CLIP 11262), this protein is Glycine cleavage system H protein.